The sequence spans 345 residues: Dihydroorotate dehydrogenase (quinone) (345 aa).

FMN contacts are provided by residues 65–69 (AGLDK) and Thr89. Residue Lys69 participates in substrate binding. 114-118 (NRMGF) contacts substrate. Residues Asn142 and Asn175 each coordinate FMN. A substrate-binding site is contributed by Asn175. Residue Ser178 is the Nucleophile of the active site. Substrate is bound at residue Asn180. Positions 220 and 248 each coordinate FMN. Substrate is bound at residue 249–250 (NT). Residues Gly271, Gly300, and 321-322 (YT) contribute to the FMN site.

This sequence belongs to the dihydroorotate dehydrogenase family. Type 2 subfamily. In terms of assembly, monomer. FMN is required as a cofactor.

The protein localises to the cell membrane. It carries out the reaction (S)-dihydroorotate + a quinone = orotate + a quinol. Its pathway is pyrimidine metabolism; UMP biosynthesis via de novo pathway; orotate from (S)-dihydroorotate (quinone route): step 1/1. Functionally, catalyzes the conversion of dihydroorotate to orotate with quinone as electron acceptor. This is Dihydroorotate dehydrogenase (quinone) from Burkholderia cenocepacia (strain HI2424).